The following is a 332-amino-acid chain: Opticin (332 aa).

Residues 1-19 form the signal peptide; that stretch reads MRLLAFLSLLALVLQETGT. The interval 21–41 is disordered; sequence SLPRKERKRREEQMPREGDSF. Residues 29–39 are compositionally biased toward basic and acidic residues; sequence RREEQMPREGD. Sulfotyrosine is present on residues Tyr65 and Tyr71. The segment at 86-106 is disordered; sequence ATSISPAKSTTAPGTPSSNPT. The 38-residue stretch at 116 to 153 folds into the LRRNT domain; sequence LLSSQPNHGLPTCLVCVCLGSSVYCDDIDLEDIPPLPR. Position 139 is a sulfotyrosine (Tyr139). LRR repeat units follow at residues 154-175, 178-199, 202-223, 248-269, 270-290, and 300-320; these read RTAYLYARFNRISRIRAEDFKG, KLKRIDLSNNLISSIDNDAFRL, ALQDLILPENQLEALPVLPSGI, KLQFLYLSDNLLDSIPGPLPLS, LRSVHLQNNLIETMQRDVFCD, and QLEDIRLDGNPINLSLFPSAY. Cys289 and Cys322 form a disulfide bridge. N-linked (GlcNAc...) asparagine glycosylation occurs at Asn312.

The protein belongs to the small leucine-rich proteoglycan (SLRP) family. SLRP class III subfamily. Homodimer. Post-translationally, O-glycosylated. Proteolytically cleaved by MMP1, MMP2, MMP3, MMP7, MMP8, MMP9, ADAMTS4, and ADAMTS5. Proteolytically cleaved by MMP13. The degradation of OPTC by proteases may contribute to osteoarthritis pathophysiology. In terms of processing, sulfated on tyrosine residues. In terms of tissue distribution, expressed in cartilage and synovial membranes (at protein level). Expressed in the retina, iris, ligament, skin and fetal liver (at protein level). Expressed in the retinal pigment epithelium (at protein level). Expressed in synovial fibroblasts and subchondral bone osteoblasts.

The protein resides in the secreted. The protein localises to the extracellular space. Its subcellular location is the extracellular matrix. In terms of biological role, inhibits angiogenesis in the vitreous humor of the eye, and therefore represses neovascularization. Binds collagen fibrils. May be involved in collagen fiber organization via regulation of other members of the small leucine-rich repeat proteoglycan superfamily. The sequence is that of Opticin (OPTC) from Homo sapiens (Human).